The chain runs to 564 residues: MAINSSDKWTVIAICLILGILLAFILMFWLERFRVIIKSNAHKHDPSDKRQIWLEKYYLFVRQIYTYLVTHKVILTLIAVPVVFAISIPFIGMQTPASSHGKQTTQVSTGNWSKNAVAARLGFLACGLYVTSYFFSIKNNPFALLLISSHEKMNYVHRRLSQYAIMIGAIHGFAYIGLAAQGKRALLTARVTIIGYVILGLMVIMIVSSLPFFRRRFYEWFFVLHHMCSIGFLITIWLHHRRCVVYMKVCVAVYVFDRGCRMLRSFLNRSKFDVVLVEDDLIYMKGPRPKKSFFGLPWGAGNHMYINIPSLSYWQIHPFTIASVPSDDFIELFVAVRAGFTKRLAKKVSSKSLSDVSDINISDEKIEKNGDVGIEVMERHSLSQEDLVFESSAAKVSVLMDGPYGPVSNPYKDYSYLFLFAGGVGVSYILPIILDTIKKQSRTVHITFVWSARSSALLNIVHKSLCEAVRYTEMNINIFCHLTNSYPVEEVSSLNSQSARNYSLQYLNGRPDVNDYFKDFLHATGTQTAALASCGSDKLLRHLKSCVNTHSPSTVDLYQHYEEI.

Asn-4 is a glycosylation site (N-linked (GlcNAc...) asparagine). A run of 2 helical transmembrane segments spans residues 10 to 30 (TVIA…MFWL) and 73 to 93 (VILT…FIGM). Residue Asn-111 is glycosylated (N-linked (GlcNAc...) asparagine). A helical membrane pass occupies residues 117–137 (VAARLGFLACGLYVTSYFFSI). One can recognise a Ferric oxidoreductase domain in the interval 121 to 254 (LGFLACGLYV…VYMKVCVAVY (134 aa)). Heme is bound by residues His-157 and His-171. Helical transmembrane passes span 160-180 (LSQY…GLAA) and 193-213 (IIGY…LPFF). 2 residues coordinate heme: His-225 and His-239. One can recognise an FAD-binding FR-type domain in the interval 255–410 (VFDRGCRMLR…DGPYGPVSNP (156 aa)). N-linked (GlcNAc...) asparagine glycosylation is present at Asn-268. 317-323 (HPFTIAS) serves as a coordination point for FAD. Residue Asn-360 is glycosylated (N-linked (GlcNAc...) asparagine). Phosphoserine is present on residues Ser-362, Ser-381, and Ser-383. Residues 417–437 (LFLFAGGVGVSYILPIILDTI) traverse the membrane as a helical segment. 419–427 (LFAGGVGVS) provides a ligand contact to NAD(+). An N-linked (GlcNAc...) asparagine glycan is attached at Asn-501.

The protein belongs to the ferric reductase (FRE) family. FAD is required as a cofactor. Requires heme as cofactor.

The protein localises to the cell membrane. It catalyses the reaction 2 a Fe(II)-siderophore + NADP(+) + H(+) = 2 a Fe(III)-siderophore + NADPH. Metalloreductase responsible for reducing extracellular iron and copper prior to import. Catalyzes the reductive uptake of Fe(3+)-salts and Fe(3+) bound to catecholate or hydroxamate siderophores. Fe(3+) is reduced to Fe(2+), which then dissociates from the siderophore and can be imported by the high-affinity Fe(2+) transport complex in the plasma membrane. Also participates in Cu(2+) reduction and Cu(+) uptake. This Schizosaccharomyces pombe (strain 972 / ATCC 24843) (Fission yeast) protein is Ferric reductase transmembrane component 1 (frp1).